Consider the following 31-residue polypeptide: Branched-chain-amino-acid aminotransferase, mitochondrial (31 aa).

The transit peptide at 1–27 (MAAAALRQIWARKFLPVPWLLCGPRRY) directs the protein to the mitochondrion.

The protein belongs to the class-IV pyridoxal-phosphate-dependent aminotransferase family. Homodimer. Pyridoxal 5'-phosphate is required as a cofactor.

The protein localises to the mitochondrion. It carries out the reaction L-leucine + 2-oxoglutarate = 4-methyl-2-oxopentanoate + L-glutamate. The catalysed reaction is L-isoleucine + 2-oxoglutarate = (S)-3-methyl-2-oxopentanoate + L-glutamate. It catalyses the reaction L-valine + 2-oxoglutarate = 3-methyl-2-oxobutanoate + L-glutamate. Functionally, catalyzes the first reaction in the catabolism of the essential branched chain amino acids leucine, isoleucine, and valine. May also function as a transporter of branched chain alpha-keto acids. The polypeptide is Branched-chain-amino-acid aminotransferase, mitochondrial (BCAT2) (Sus scrofa (Pig)).